The following is a 167-amino-acid chain: Endoribonuclease YbeY (167 aa).

Residues H131, H135, and H141 each coordinate Zn(2+).

Belongs to the endoribonuclease YbeY family. Zn(2+) is required as a cofactor.

The protein resides in the cytoplasm. In terms of biological role, single strand-specific metallo-endoribonuclease involved in late-stage 70S ribosome quality control and in maturation of the 3' terminus of the 16S rRNA. This Rickettsia rickettsii (strain Sheila Smith) protein is Endoribonuclease YbeY.